The chain runs to 162 residues: NADH-quinone oxidoreductase subunit I (162 aa).

4Fe-4S ferredoxin-type domains are found at residues 54 to 83 (RRYE…IESE) and 93 to 122 (TRYD…ETQI). Residues Cys-63, Cys-66, Cys-69, Cys-73, Cys-102, Cys-105, Cys-108, and Cys-112 each coordinate [4Fe-4S] cluster.

The protein belongs to the complex I 23 kDa subunit family. As to quaternary structure, NDH-1 is composed of 14 different subunits. Subunits NuoA, H, J, K, L, M, N constitute the membrane sector of the complex. The cofactor is [4Fe-4S] cluster.

The protein localises to the cell inner membrane. The enzyme catalyses a quinone + NADH + 5 H(+)(in) = a quinol + NAD(+) + 4 H(+)(out). Functionally, NDH-1 shuttles electrons from NADH, via FMN and iron-sulfur (Fe-S) centers, to quinones in the respiratory chain. The immediate electron acceptor for the enzyme in this species is believed to be ubiquinone. Couples the redox reaction to proton translocation (for every two electrons transferred, four hydrogen ions are translocated across the cytoplasmic membrane), and thus conserves the redox energy in a proton gradient. In Burkholderia cenocepacia (strain ATCC BAA-245 / DSM 16553 / LMG 16656 / NCTC 13227 / J2315 / CF5610) (Burkholderia cepacia (strain J2315)), this protein is NADH-quinone oxidoreductase subunit I.